A 341-amino-acid polypeptide reads, in one-letter code: MLVLGIESSCDETGLALYDTERGLLAHALHSQIAMHREYGGVVPELASRDHIRRALPLLEEVLERSGAARGDIDAIAYTQGPGLAGALLVGASIANSLAMAWNKPTIGIHHLEGHLLSPLLVDEPPPFPFVALLVSGGHTQLMRVTDVGVYETLGETLDDAAGEAFDKTAKLLGLGYPGGPEVSRLAEFGTPGAVVLPRPMLHSGDLDFSFSGLKTAVLTHVKKLGGNVCEQAKADLARGFVDAAVEVLAVKSLAALKKTKLKRLVVAGGVGANRQLREALSSAAQKRGFAVHYPDLSLCTDNGAMIALAGALRMQRWPAQATDDYAFTVKPRWDLGSLGA.

Residues His-111 and His-115 each coordinate Fe cation. Substrate contacts are provided by residues 134 to 138, Asp-167, Gly-180, and Asn-274; that span reads LVSGG. Asp-302 is a binding site for Fe cation.

Belongs to the KAE1 / TsaD family. Fe(2+) is required as a cofactor.

Its subcellular location is the cytoplasm. The catalysed reaction is L-threonylcarbamoyladenylate + adenosine(37) in tRNA = N(6)-L-threonylcarbamoyladenosine(37) in tRNA + AMP + H(+). Functionally, required for the formation of a threonylcarbamoyl group on adenosine at position 37 (t(6)A37) in tRNAs that read codons beginning with adenine. Is involved in the transfer of the threonylcarbamoyl moiety of threonylcarbamoyl-AMP (TC-AMP) to the N6 group of A37, together with TsaE and TsaB. TsaD likely plays a direct catalytic role in this reaction. This is tRNA N6-adenosine threonylcarbamoyltransferase from Paraburkholderia phymatum (strain DSM 17167 / CIP 108236 / LMG 21445 / STM815) (Burkholderia phymatum).